The primary structure comprises 440 residues: 5-hydroxytryptamine receptor 6 (440 aa).

The Extracellular segment spans residues 1–27; the sequence is MVPEPGPTANSTPAWGAGPPSAPGGSG. Residues 28–52 traverse the membrane as a helical segment; sequence WVAAALCVVIALTAAANSLLIALIC. Topologically, residues 53–62 are cytoplasmic; the sequence is TQPALRNTSN. The chain crosses the membrane as a helical span at residues 63-88; sequence FFLVSLFTSDLMVGLVVMPPAMLNAL. Over 89–96 the chain is Extracellular; the sequence is YGRWVLAR. Residues 97 to 122 traverse the membrane as a helical segment; it reads GLCLLWTAFDVMCCSASILNLCLISL. Cysteine 99 and cysteine 180 are oxidised to a cystine. A serotonin-binding site is contributed by aspartate 106. Over 123 to 142 the chain is Cytoplasmic; sequence DRYLLILSPLRYKLRMTPLR. A helical transmembrane segment spans residues 143 to 167; that stretch reads ALALVLGAWSLAALASFLPLLLGWH. The Extracellular segment spans residues 168-185; the sequence is ELGHARPPVPGQCRLLAS. The helical transmembrane segment at 186–209 threads the bilayer; that stretch reads LPFVLVASGLTFFLPSGAICFTYC. The Cytoplasmic segment spans residues 210–266; the sequence is RILLAARKQAVQVASLTTGMASQASETLQVPRTPRPGVESADSRRLATKHSRKALKA. A helical membrane pass occupies residues 267–293; that stretch reads SLTLGILLGMFFVTWLPFFVANIVQAV. Position 288 (asparagine 288) interacts with serotonin. Over 294–299 the chain is Extracellular; that stretch reads CDCISP. The chain crosses the membrane as a helical span at residues 300 to 323; it reads GLFDVLTWLGYCNSTMNPIIYPLF. Over 324–440 the chain is Cytoplasmic; sequence MRDFKRALGR…RPHPLGIPTN (117 aa). The segment at 346-392 is disordered; that stretch reads ASLASPSLRTSHSGPRPGLSLQQVLPLPLPPDSDSDSDAGSGGSSGL. Positions 347 to 358 are enriched in polar residues; it reads SLASPSLRTSHS. Positions 362–371 are enriched in low complexity; sequence PGLSLQQVLP.

It belongs to the G-protein coupled receptor 1 family. As to quaternary structure, interacts with MTOR, RPTOR and NF1. Interacts with CDK5. In terms of tissue distribution, expressed in several human brain regions, most prominently in the caudate nucleus.

The protein localises to the cell membrane. In terms of biological role, G-protein coupled receptor for 5-hydroxytryptamine (serotonin), a biogenic hormone that functions as a neurotransmitter, a hormone and a mitogen. Also has a high affinity for tricyclic psychotropic drugs. Ligand binding causes a conformation change that triggers signaling via guanine nucleotide-binding proteins (G proteins) and modulates the activity of downstream effectors. HTR6 is coupled to G(s) G alpha proteins and mediates activation of adenylate cyclase activity. Controls pyramidal neurons migration during corticogenesis, through the regulation of CDK5 activity. Is an activator of mTOR signaling. This chain is 5-hydroxytryptamine receptor 6, found in Homo sapiens (Human).